Consider the following 284-residue polypeptide: Putative L-ribulose-5-phosphate 3-epimerase UlaE (284 aa).

Belongs to the L-ribulose-5-phosphate 3-epimerase family.

The catalysed reaction is L-ribulose 5-phosphate = L-xylulose 5-phosphate. It participates in cofactor degradation; L-ascorbate degradation; D-xylulose 5-phosphate from L-ascorbate: step 3/4. Functionally, catalyzes the isomerization of L-xylulose-5-phosphate to L-ribulose-5-phosphate. Is involved in the anaerobic L-ascorbate utilization. In Shigella dysenteriae serotype 1 (strain Sd197), this protein is Putative L-ribulose-5-phosphate 3-epimerase UlaE.